We begin with the raw amino-acid sequence, 248 residues long: AA9 family lytic polysaccharide monooxygenase G (248 aa).

Positions 1 to 21 (MLPNAAGLLVAGVVSLSGVAA) are cleaved as a signal peptide. A Cu(2+)-binding site is contributed by His-22. The N-linked (GlcNAc...) asparagine glycan is linked to Asn-58. The cysteines at positions 77 and 195 are disulfide-linked. Position 107 (His-107) interacts with Cu(2+). Position 190 (Gln-190) interacts with O2. Tyr-192 lines the Cu(2+) pocket. The N-linked (GlcNAc...) asparagine glycan is linked to Asn-203.

This sequence belongs to the polysaccharide monooxygenase AA9 family. Cu(2+) is required as a cofactor.

Its subcellular location is the secreted. The catalysed reaction is [(1-&gt;4)-beta-D-glucosyl]n+m + reduced acceptor + O2 = 4-dehydro-beta-D-glucosyl-[(1-&gt;4)-beta-D-glucosyl]n-1 + [(1-&gt;4)-beta-D-glucosyl]m + acceptor + H2O.. In terms of biological role, lytic polysaccharide monooxygenase (LPMO) that depolymerizes crystalline and amorphous polysaccharides via the oxidation of scissile alpha- or beta-(1-4)-glycosidic bonds, yielding C1 or C4 oxidation products. Catalysis by LPMOs requires the reduction of the active-site copper from Cu(II) to Cu(I) by a reducing agent and H(2)O(2) or O(2) as a cosubstrate. The polypeptide is AA9 family lytic polysaccharide monooxygenase G (Malbranchea cinnamomea (Thermophilic fungus)).